The chain runs to 176 residues: ATP-dependent protease subunit HslV (176 aa).

Residue threonine 2 is part of the active site. Na(+)-binding residues include glycine 157, cysteine 160, and threonine 163.

It belongs to the peptidase T1B family. HslV subfamily. As to quaternary structure, a double ring-shaped homohexamer of HslV is capped on each side by a ring-shaped HslU homohexamer. The assembly of the HslU/HslV complex is dependent on binding of ATP.

It localises to the cytoplasm. It catalyses the reaction ATP-dependent cleavage of peptide bonds with broad specificity.. With respect to regulation, allosterically activated by HslU binding. Protease subunit of a proteasome-like degradation complex believed to be a general protein degrading machinery. The sequence is that of ATP-dependent protease subunit HslV from Ectopseudomonas mendocina (strain ymp) (Pseudomonas mendocina).